Here is a 373-residue protein sequence, read N- to C-terminus: Putative zinc finger protein 012R (373 aa).

The segment at 2 to 29 (FECTHCDLHFESKSKLATHQKTKKCTAH) adopts a C2H2-type zinc-finger fold.

This sequence belongs to the IIV-6 302L family.

The sequence is that of Putative zinc finger protein 012R from Invertebrate iridescent virus 3 (IIV-3).